We begin with the raw amino-acid sequence, 88 residues long: Small ribosomal subunit protein bS20 (88 aa).

The protein belongs to the bacterial ribosomal protein bS20 family.

Binds directly to 16S ribosomal RNA. This Bradyrhizobium sp. (strain BTAi1 / ATCC BAA-1182) protein is Small ribosomal subunit protein bS20.